Here is a 484-residue protein sequence, read N- to C-terminus: Adenylyltransferase and sulfurtransferase uba4 (484 aa).

The span at 39-49 (AKAQSAAATTA) shows a compositional bias: low complexity. Residues 39–58 (AKAQSAAATTAGDNHDKPRR) are disordered. ATP-binding positions include Gly98, Asp119, 126-130 (SNLHR), Lys143, and 187-188 (DN). Residues Cys236 and Cys239 each coordinate Zn(2+). The active-site Glycyl thioester intermediate; for adenylyltransferase activity is the Cys253. Zn(2+)-binding residues include Cys313 and Cys316. Residues 370–482 (PEKTPTLIDV…WREQVDPEWP (113 aa)) enclose the Rhodanese domain. Cys437 functions as the Cysteine persulfide intermediate; for sulfurtransferase activity in the catalytic mechanism.

This sequence in the N-terminal section; belongs to the HesA/MoeB/ThiF family. UBA4 subfamily. Zn(2+) serves as cofactor.

It localises to the cytoplasm. Its subcellular location is the cytosol. The catalysed reaction is [molybdopterin-synthase sulfur-carrier protein]-C-terminal Gly-Gly + ATP + H(+) = [molybdopterin-synthase sulfur-carrier protein]-C-terminal Gly-Gly-AMP + diphosphate. The enzyme catalyses [molybdopterin-synthase sulfur-carrier protein]-C-terminal Gly-Gly-AMP + S-sulfanyl-L-cysteinyl-[cysteine desulfurase] + AH2 = [molybdopterin-synthase sulfur-carrier protein]-C-terminal-Gly-aminoethanethioate + L-cysteinyl-[cysteine desulfurase] + A + AMP + 2 H(+). Its pathway is tRNA modification; 5-methoxycarbonylmethyl-2-thiouridine-tRNA biosynthesis. It functions in the pathway cofactor biosynthesis; molybdopterin biosynthesis. In terms of biological role, plays a central role in 2-thiolation of mcm(5)S(2)U at tRNA wobble positions of cytosolic tRNA(Lys), tRNA(Glu) and tRNA(Gln). Also essential during biosynthesis of the molybdenum cofactor. Acts by mediating the C-terminal thiocarboxylation of sulfur carriers urm1 and mocs2a. Its N-terminus first activates urm1 and mocs2a as acyl-adenylates (-COAMP), then the persulfide sulfur on the catalytic cysteine is transferred to urm1 and mocs2a to form thiocarboxylation (-COSH) of their C-terminus. The reaction probably involves hydrogen sulfide that is generated from the persulfide intermediate and that acts as a nucleophile towards urm1 and mocs2a. Subsequently, a transient disulfide bond is formed. Does not use thiosulfate as sulfur donor; nfs1 probably acting as a sulfur donor for thiocarboxylation reactions. The protein is Adenylyltransferase and sulfurtransferase uba4 of Aspergillus terreus (strain NIH 2624 / FGSC A1156).